Reading from the N-terminus, the 259-residue chain is PF03932 family protein CutC (259 aa).

This sequence belongs to the CutC family. In terms of assembly, homodimer.

The protein resides in the cytoplasm. The chain is PF03932 family protein CutC from Salmonella typhi.